The following is a 573-amino-acid chain: SHC-transforming protein 2 (573 aa).

Positions 125–307 constitute a PID domain; that stretch reads LGPGVSYIVR…TGLEESAWGD (183 aa). Positions 478-569 constitute an SH2 domain; the sequence is WYHGRMSRRA…ESELHLRGVV (92 aa).

As to quaternary structure, interacts with the Trk receptors in a phosphotyrosine-dependent manner and MEGF12. Once activated, binds to GRB2. In terms of processing, phosphorylated on tyrosine by the Trk receptors.

In terms of biological role, signaling adapter that couples activated growth factor receptors to signaling pathway in neurons. Involved in the signal transduction pathways of neurotrophin-activated Trk receptors in cortical neurons. The polypeptide is SHC-transforming protein 2 (Shc2) (Rattus norvegicus (Rat)).